A 302-amino-acid chain; its full sequence is Tegument protein VP22 (302 aa).

A compositionally biased stretch (basic and acidic residues) spans 1-10; the sequence is MASSDGDRLC. Disordered stretches follow at residues 1–42 and 125–170; these read MASS…PDDS and SFTK…SSWC. Residues 154–244 are interaction with gE; that stretch reads RPISFSTAPK…ANEADLGEGA (91 aa). A compositionally biased stretch (polar residues) spans 157–170; sequence SFSTAPKTATSSWC. Positions 212 to 224 match the Nuclear export signal motif; it reads LDRLLTGAVIRIT. The disordered stretch occupies residues 243-302; that stretch reads GASVSKRGHNRKTGDLQGGMGNEPMYAQVRKPKSRTDTQTTGRITNRSRARSASRTDTRK.

The protein belongs to the alphaherpesvirinae VP22 tegument protein family. In terms of assembly, interacts with gE (via C-terminus); this interaction is necessary for the recruitment of VP22/ORF9 to the Golgi and its packaging into virions. Interacts with gM (via C-terminus). Interacts with VP16/ORF10; this interaction allows the formation of a tripartite complex composed of VP16/ORF10, VP22/ORF9 and VHS/ORF17. Interacts with the capsid-binding protein ORF44. Interacts with host CGAS. Highly phosphorylated in the host cell. Packaging is selective for underphosphorylated forms.

The protein resides in the virion tegument. Its subcellular location is the host cytoplasm. It is found in the host nucleus. The protein localises to the host Golgi apparatus. Its function is as follows. Tegument protein that plays different roles during the time course of infection. Participates in both the accumulation of viral mRNAs and viral protein translation at late time of infection. Modulates the RNase activity of the virion host shutoff protein ORF17 probably to ensure necessary levels of key cellular mRNAs and proteins. Plays a role in microtubule reorganization that occurs after viral infection by stabilizing microtubule network. Plays a role in the inhibition of host innate immune system by targeting the CGAS enzymatic activity which is the principal cytosolic DNA sensor that detects invading viral DNA. Acts by mediating disruption of liquid-like droplets in which CGAS is activated, thereby preventing CGAS activity. The chain is Tegument protein VP22 from Homo sapiens (Human).